The sequence spans 448 residues: Tryptophan dimethylallyltransferase 1 (448 aa).

Residues 80–81 (IL) and Glu-89 contribute to the L-tryptophan site. Substrate is bound by residues Arg-100, Lys-186, and Tyr-188. Positions 190 and 249 each coordinate L-tryptophan. Arg-262, Lys-264, Tyr-266, Gln-348, Tyr-350, Tyr-414, and Tyr-418 together coordinate substrate.

Belongs to the tryptophan dimethylallyltransferase family. Homodimer.

It carries out the reaction L-tryptophan + dimethylallyl diphosphate = 4-(3-methylbut-2-enyl)-L-tryptophan + diphosphate. It functions in the pathway alkaloid biosynthesis; ergot alkaloid biosynthesis. In terms of biological role, tryptophan dimethylallyltransferase; part of the gene cluster that mediates the biosynthesis of fungal ergot alkaloid. DmaW catalyzes the first step of ergot alkaloid biosynthesis by condensing dimethylallyl diphosphate (DMAP) and tryptophan to form 4-dimethylallyl-L-tryptophan. The second step is catalyzed by the methyltransferase easF that methylates 4-dimethylallyl-L-tryptophan in the presence of S-adenosyl-L-methionine, resulting in the formation of 4-dimethylallyl-L-abrine. The catalase easC and the FAD-dependent oxidoreductase easE then transform 4-dimethylallyl-L-abrine to chanoclavine-I which is further oxidized by easD in the presence of NAD(+), resulting in the formation of chanoclavine-I aldehyde. Agroclavine dehydrogenase easG then mediates the conversion of chanoclavine-I aldehyde to agroclavine via a non-enzymatic adduct reaction: the substrate is an iminium intermediate that is formed spontaneously from chanoclavine-I aldehyde in the presence of glutathione. The presence of easA is not required to complete this reaction. Further conversion of agroclavine to paspalic acid is a two-step process involving oxidation of agroclavine to elymoclavine and of elymoclavine to paspalic acid, the second step being performed by the elymoclavine oxidase cloA. Paspalic acid is then further converted to D-lysergic acid. Ergopeptines are assembled from D-lysergic acid and three different amino acids by the D-lysergyl-peptide-synthetases composed each of a monomudular and a trimodular nonribosomal peptide synthetase subunit. LpsB and lpsC encode the monomodular subunits responsible for D-lysergic acid activation and incorporation into the ergopeptine backbone. LpsA1 and A2 subunits encode the trimodular nonribosomal peptide synthetase assembling the tripeptide portion of ergopeptines. LpsA1 is responsible for formation of the major ergopeptine, ergotamine, and lpsA2 for alpha-ergocryptine, the minor ergopeptine of the total alkaloid mixture elaborated by C.purpurea. D-lysergyl-tripeptides are assembled by the nonribosomal peptide synthetases and released as N-(D-lysergyl-aminoacyl)-lactams. Cyclolization of the D-lysergyl-tripeptides is performed by the Fe(2+)/2-ketoglutarate-dependent dioxygenase easH which introduces a hydroxyl group into N-(D-lysergyl-aminoacyl)-lactam at alpha-C of the aminoacyl residue followed by spontaneous condensation with the terminal lactam carbonyl group. This is Tryptophan dimethylallyltransferase 1 from Claviceps purpurea (Ergot fungus).